The primary structure comprises 218 residues: Transcription initiation factor TFIID subunit 10 (218 aa).

2 stretches are compositionally biased toward low complexity: residues Met1 to Pro21 and Ala29 to Ala39. The disordered stretch occupies residues Met1–Ala85. Position 2 is an N-acetylserine (Ser2). The residue at position 44 (Ser44) is a Phosphoserine. Position 48 is a phosphothreonine (Thr48). The segment covering Thr48–Gly62 has biased composition (gly residues). The short motif at Lys187 to Lys189 is the [KR]-[STA]-K motif element. Lys189 carries the post-translational modification Allysine; alternate. Lys189 is subject to N6,N6,N6-trimethyllysine; alternate.

It belongs to the TAF10 family. As to quaternary structure, component of the TFIID basal transcription factor complex, composed of TATA-box-binding protein TBP, and a number of TBP-associated factors (TAFs), including TAF1, TAF2, TAF3, TAF4, TAF5, TAF6, TAF7, TAF8, TAF9, TAF10, TAF11, TAF12 and TAF13. Component of the TATA-binding protein-free TAF complex (TFTC), the PCAF histone acetylase complex and the STAGA transcription coactivator-HAT complex. The PCAF complex consists at least of TADA2L/ADA2, TADA3L/ADA3, SUPT3H, TAF5L TAF6L, TAF9, TAF10, TAF12 and TRRAP. The TFTC-HAT complex consists at least of TAF5L, TAF6L, TADA3L, SUPT3H, TAF2, TAF4, TAF5, GCN5L2/GCN5, TAF10 and TRRAP. The STAGA transcription coactivator-HAT complex consists at least of SUPT3H, GCN5L2, TAF5L, TAF6L, SUPT7L, TADA3L, TAD1L, TAF10, TAF12, TRRAP and TAF9. The STAGA core complex is associated with a subcomplex required for histone deubiquitination composed of ATXN7L3, ENY2 and USP22. Interacts with TAF3. Interacts with LOXL2. Interacts with TAF12 isoform TAFII20; the interaction is direct. In terms of processing, monomethylated at Lys-189 by SETD7, leading to increased affinity for RNA polymerase II. Post-translationally, lysine deamination at Lys-189 to form allysine is mediated by LOXL2. Allysine formation by LOXL2 results in release of TAF10 from promoters, leading to inhibition of TFIID-dependent transcription.

It is found in the nucleus. Functionally, the TFIID basal transcription factor complex plays a major role in the initiation of RNA polymerase II (Pol II)-dependent transcription. TFIID recognizes and binds promoters with or without a TATA box via its subunit TBP, a TATA-box-binding protein, and promotes assembly of the pre-initiation complex (PIC). The TFIID complex consists of TBP and TBP-associated factors (TAFs), including TAF1, TAF2, TAF3, TAF4, TAF5, TAF6, TAF7, TAF8, TAF9, TAF10, TAF11, TAF12 and TAF13. TAF10 is also component of the PCAF histone acetylase complex, the TATA-binding protein-free TAF complex (TFTC) and the STAGA transcription coactivator-HAT complex. May regulate cyclin E expression. The chain is Transcription initiation factor TFIID subunit 10 (TAF10) from Homo sapiens (Human).